The chain runs to 80 residues: UPF0248 protein YG5714_2801 (80 aa).

Belongs to the UPF0248 family.

In Saccharolobus islandicus (strain Y.G.57.14 / Yellowstone #1) (Sulfolobus islandicus), this protein is UPF0248 protein YG5714_2801.